A 101-amino-acid polypeptide reads, in one-letter code: Protein RADIALIS-like 2 (101 aa).

Residues Tyr-9–Glu-64 enclose the SANT domain. The tract at residues Gly-69 to Gln-101 is disordered.

Expressed in the funiculus of ovules and in embryos. In young ovules, expression is observed in the adaxial side of the funiculus (the stalk connecting the embryo sac to the placenta). Also expressed in heart-stage embryos, in the cortex and endodermis of the hypocotyl region but not in the cotyledons, shoot and root apical meristems, provasculature or epidermis. Not detected in young seedlings, mature roots or in young floral primordia.

The protein resides in the nucleus. In terms of biological role, probable transcription factor. Required for female gametophyte development. This chain is Protein RADIALIS-like 2 (RL2), found in Arabidopsis thaliana (Mouse-ear cress).